A 306-amino-acid chain; its full sequence is 4-hydroxy-3-methylbut-2-enyl diphosphate reductase (306 aa).

Cys-12 is a [4Fe-4S] cluster binding site. His-41 and His-74 together coordinate (2E)-4-hydroxy-3-methylbut-2-enyl diphosphate. Residues His-41 and His-74 each coordinate dimethylallyl diphosphate. Positions 41 and 74 each coordinate isopentenyl diphosphate. A [4Fe-4S] cluster-binding site is contributed by Cys-96. Residue His-124 participates in (2E)-4-hydroxy-3-methylbut-2-enyl diphosphate binding. His-124 provides a ligand contact to dimethylallyl diphosphate. His-124 lines the isopentenyl diphosphate pocket. The active-site Proton donor is the Glu-126. Residue Thr-164 participates in (2E)-4-hydroxy-3-methylbut-2-enyl diphosphate binding. Cys-194 serves as a coordination point for [4Fe-4S] cluster. The (2E)-4-hydroxy-3-methylbut-2-enyl diphosphate site is built by Ser-222, Ser-223, Asn-224, and Ser-266. Dimethylallyl diphosphate-binding residues include Ser-222, Ser-223, Asn-224, and Ser-266. Isopentenyl diphosphate contacts are provided by Ser-222, Ser-223, Asn-224, and Ser-266.

Belongs to the IspH family. [4Fe-4S] cluster is required as a cofactor.

It catalyses the reaction isopentenyl diphosphate + 2 oxidized [2Fe-2S]-[ferredoxin] + H2O = (2E)-4-hydroxy-3-methylbut-2-enyl diphosphate + 2 reduced [2Fe-2S]-[ferredoxin] + 2 H(+). The catalysed reaction is dimethylallyl diphosphate + 2 oxidized [2Fe-2S]-[ferredoxin] + H2O = (2E)-4-hydroxy-3-methylbut-2-enyl diphosphate + 2 reduced [2Fe-2S]-[ferredoxin] + 2 H(+). It functions in the pathway isoprenoid biosynthesis; dimethylallyl diphosphate biosynthesis; dimethylallyl diphosphate from (2E)-4-hydroxy-3-methylbutenyl diphosphate: step 1/1. Its pathway is isoprenoid biosynthesis; isopentenyl diphosphate biosynthesis via DXP pathway; isopentenyl diphosphate from 1-deoxy-D-xylulose 5-phosphate: step 6/6. In terms of biological role, catalyzes the conversion of 1-hydroxy-2-methyl-2-(E)-butenyl 4-diphosphate (HMBPP) into a mixture of isopentenyl diphosphate (IPP) and dimethylallyl diphosphate (DMAPP). Acts in the terminal step of the DOXP/MEP pathway for isoprenoid precursor biosynthesis. This Ruthia magnifica subsp. Calyptogena magnifica protein is 4-hydroxy-3-methylbut-2-enyl diphosphate reductase.